The sequence spans 133 residues: Nickel-responsive regulator (133 aa).

Residues His-76, His-87, His-89, and Cys-95 each coordinate Ni(2+).

Belongs to the transcriptional regulatory CopG/NikR family. In terms of assembly, homotetramer. It depends on Ni(2+) as a cofactor.

In terms of biological role, transcriptional repressor of the nikABCDE operon. Is active in the presence of excessive concentrations of intracellular nickel. This is Nickel-responsive regulator from Escherichia coli (strain SE11).